Here is a 197-residue protein sequence, read N- to C-terminus: Xanthine phosphoribosyltransferase (197 aa).

2 residues coordinate xanthine: L20 and N27. Residue 128–132 (ANGQA) coordinates 5-phospho-alpha-D-ribose 1-diphosphate. K156 is a binding site for xanthine.

The protein belongs to the purine/pyrimidine phosphoribosyltransferase family. Xpt subfamily. In terms of assembly, homodimer.

The protein localises to the cytoplasm. The catalysed reaction is XMP + diphosphate = xanthine + 5-phospho-alpha-D-ribose 1-diphosphate. Its pathway is purine metabolism; XMP biosynthesis via salvage pathway; XMP from xanthine: step 1/1. In terms of biological role, converts the preformed base xanthine, a product of nucleic acid breakdown, to xanthosine 5'-monophosphate (XMP), so it can be reused for RNA or DNA synthesis. This chain is Xanthine phosphoribosyltransferase, found in Bacillus cytotoxicus (strain DSM 22905 / CIP 110041 / 391-98 / NVH 391-98).